Here is a 416-residue protein sequence, read N- to C-terminus: Diaminobutyrate--2-oxoglutarate transaminase (416 aa).

Lys263 bears the N6-(pyridoxal phosphate)lysine mark.

Belongs to the class-III pyridoxal-phosphate-dependent aminotransferase family. Requires pyridoxal 5'-phosphate as cofactor.

It catalyses the reaction L-2,4-diaminobutanoate + 2-oxoglutarate = L-aspartate 4-semialdehyde + L-glutamate. It functions in the pathway amine and polyamine biosynthesis; ectoine biosynthesis; L-ectoine from L-aspartate 4-semialdehyde: step 1/3. In terms of biological role, catalyzes reversively the conversion of L-aspartate beta-semialdehyde (ASA) to L-2,4-diaminobutyrate (DABA) by transamination with L-glutamate. The chain is Diaminobutyrate--2-oxoglutarate transaminase (ectB) from Virgibacillus pantothenticus.